Reading from the N-terminus, the 118-residue chain is Small ribosomal subunit protein uS13 (118 aa).

The segment at 92 to 118 (RRSLPVRGQRTKTNARTRKGPRKPIKK) is disordered.

This sequence belongs to the universal ribosomal protein uS13 family. In terms of assembly, part of the 30S ribosomal subunit. Forms a loose heterodimer with protein S19. Forms two bridges to the 50S subunit in the 70S ribosome.

Its function is as follows. Located at the top of the head of the 30S subunit, it contacts several helices of the 16S rRNA. In the 70S ribosome it contacts the 23S rRNA (bridge B1a) and protein L5 of the 50S subunit (bridge B1b), connecting the 2 subunits; these bridges are implicated in subunit movement. Contacts the tRNAs in the A and P-sites. The sequence is that of Small ribosomal subunit protein uS13 from Acinetobacter baumannii (strain AB307-0294).